A 544-amino-acid polypeptide reads, in one-letter code: Probable protein kinase UbiB (544 aa).

Positions 123–501 (DFDLVPLASA…KRQQATGKFL (379 aa)) constitute a Protein kinase domain. ATP is bound by residues 129-137 (LASASIAQV) and Lys152. The Proton acceptor role is filled by Asp287. A run of 2 helical transmembrane segments spans residues 496 to 516 (ATGKFLFGVGATLVVCSAILV) and 519 to 539 (TYEQLSLATAIAGVTFWLFSW).

Belongs to the ABC1 family. UbiB subfamily.

The protein resides in the cell inner membrane. Its pathway is cofactor biosynthesis; ubiquinone biosynthesis [regulation]. Its function is as follows. Is probably a protein kinase regulator of UbiI activity which is involved in aerobic coenzyme Q (ubiquinone) biosynthesis. In Vibrio vulnificus (strain CMCP6), this protein is Probable protein kinase UbiB.